The sequence spans 219 residues: Small ribosomal subunit protein uS3c (219 aa).

Positions 43–120 (IQNYIQKNMQ…KINITITKIT (78 aa)) constitute a KH type-2 domain.

The protein belongs to the universal ribosomal protein uS3 family. In terms of assembly, part of the 30S ribosomal subunit.

It is found in the plastid. It localises to the chloroplast. This is Small ribosomal subunit protein uS3c (rps3) from Oenothera elata subsp. hookeri (Hooker's evening primrose).